The sequence spans 352 residues: Phosphoribosylformylglycinamidine cyclo-ligase (352 aa).

It belongs to the AIR synthase family.

It is found in the cytoplasm. It catalyses the reaction 2-formamido-N(1)-(5-O-phospho-beta-D-ribosyl)acetamidine + ATP = 5-amino-1-(5-phospho-beta-D-ribosyl)imidazole + ADP + phosphate + H(+). Its pathway is purine metabolism; IMP biosynthesis via de novo pathway; 5-amino-1-(5-phospho-D-ribosyl)imidazole from N(2)-formyl-N(1)-(5-phospho-D-ribosyl)glycinamide: step 2/2. The sequence is that of Phosphoribosylformylglycinamidine cyclo-ligase from Pseudomonas savastanoi pv. phaseolicola (strain 1448A / Race 6) (Pseudomonas syringae pv. phaseolicola (strain 1448A / Race 6)).